Reading from the N-terminus, the 467-residue chain is MKHKVKRIHFVGIGGAGMSGIAEVLVNLGYSVSGSDLGDSAATRRLKAMGAKVVLGHDAANVEAADALVVSTAVKNDNPEVIAARARHIPIVPRAQMLAELMRLKSGIAIAGTHGKTTTTSLVASILAEGAMDPTFVIGGRLNAAGANARLGKGDFLVAEADESDASFLMLSPVISVVTNIDADHMDTYGHDFARLKQAFVDFLQRLPFYGVAVLCEDDPHVRSIMPLVSKQVVRYGLSETANIRAENIRAEGGRMIFDVLRVNGSTTRLADVVLNLPGLHNVRNALAAIAVATEVQVPDEAIVKALAEFSGVGRRFQRYGEVAAPSGGTFTLIDDYGHHPVEMEATLAAARGAFPGRRLVLAFQPHRYTRTRDCFEDFVKVLSTVDALLLAEVYAAGEAPIVAADGRALSRALRVAGKVEPVFVEDIGGMPQAVLEAVRDGDVVITMGAGSIGAVPGKLASNEEQA.

Gly-112–Thr-118 is a binding site for ATP.

It belongs to the MurCDEF family.

Its subcellular location is the cytoplasm. It catalyses the reaction UDP-N-acetyl-alpha-D-muramate + L-alanine + ATP = UDP-N-acetyl-alpha-D-muramoyl-L-alanine + ADP + phosphate + H(+). Its pathway is cell wall biogenesis; peptidoglycan biosynthesis. Its function is as follows. Cell wall formation. The sequence is that of UDP-N-acetylmuramate--L-alanine ligase from Azoarcus sp. (strain BH72).